The following is a 265-amino-acid chain: 5'-nucleotidase SurE (265 aa).

A divalent metal cation is bound by residues aspartate 11, aspartate 12, serine 43, and asparagine 101.

The protein belongs to the SurE nucleotidase family. Requires a divalent metal cation as cofactor.

The protein localises to the cytoplasm. It carries out the reaction a ribonucleoside 5'-phosphate + H2O = a ribonucleoside + phosphate. Functionally, nucleotidase that shows phosphatase activity on nucleoside 5'-monophosphates. This Synechococcus sp. (strain CC9311) protein is 5'-nucleotidase SurE.